The chain runs to 469 residues: Putative pyridoxal-dependent decarboxylase domain-containing protein 2 (469 aa).

Residues 12 to 40 are a coiled coil; that stretch reads TLAEMGKNLKEAVKMLEDSQRRTEEENGK. Residues 28–44 are compositionally biased toward basic and acidic residues; the sequence is EDSQRRTEEENGKKLIS. Residues 28-47 are disordered; the sequence is EDSQRRTEEENGKKLISRDI.

This sequence belongs to the group II decarboxylase family. Pyridoxal 5'-phosphate is required as a cofactor.

The polypeptide is Putative pyridoxal-dependent decarboxylase domain-containing protein 2 (PDXDC2P) (Homo sapiens (Human)).